The chain runs to 316 residues: Glucan endo-1,3-beta-glucosidase GV (316 aa).

The active-site Proton donor is the glutamate 99. Residue glutamate 239 is the Nucleophile of the active site.

Belongs to the glycosyl hydrolase 17 family.

The protein resides in the cytoplasm. The enzyme catalyses Hydrolysis of (1-&gt;3)-beta-D-glucosidic linkages in (1-&gt;3)-beta-D-glucans.. In terms of biological role, may provide a degree of protection against microbial invasion of germinated barley grain through its ability to degrade fungal cell wall polysaccharides. The sequence is that of Glucan endo-1,3-beta-glucosidase GV from Hordeum vulgare (Barley).